A 438-amino-acid chain; its full sequence is Battenin (438 aa).

Residues 1-27 (MGSSAGSWRRLEDSEREETDSEPQAPR) form a disordered region. At 1 to 37 (MGSSAGSWRRLEDSEREETDSEPQAPRLDSRSVLWKN) the chain is on the cytoplasmic side. S14 carries the phosphoserine modification. Residues 38–58 (AVGFWILGLCNNFSYVVMLSA) form a helical membrane-spanning segment. Residues 59–127 (AHDILKQEQA…GLHLLPYSPR (69 aa)) are Lumenal-facing. The interval 67 to 87 (QASGNQSHVEPGPTPTPHNSS) is disordered. N-linked (GlcNAc...) asparagine glycans are attached at residues N71 and N85. A helical transmembrane segment spans residues 128–148 (VLVSGVCSAGSFVLVAFSQSV). Topologically, residues 149 to 151 (GLS) are cytoplasmic. A helical membrane pass occupies residues 152–172 (LCGVVLASISSGLGEVTFLSL). The Lumenal portion of the chain corresponds to 173 to 182 (TAFYPSAVIS). A helical transmembrane segment spans residues 183 to 203 (WWSSGTGGAGLLGSLSYLGLT). Residues 204–277 (QAGLSPQHTL…DLSLQERWTV (74 aa)) lie on the Cytoplasmic side of the membrane. The tract at residues 239–261 (PGGENEAETAARQPLIGTETPES) is disordered. A Lysosomal targeting motif motif is present at residues 242-244 (ENE). A Lysosomal targeting motif. Required for AP1G1, AP2A2 and AP3D1 interaction motif is present at residues 253–254 (LI). Residues 278-298 (FKGLLWYIIPLVLVYFAEYFI) traverse the membrane as a helical segment. Over 299 to 346 (NQGLFELLFFRNTSLSHAQQYRWYQMLYQAGVFASRSSLQCCRIRFTW) the chain is Lumenal. N310 carries N-linked (GlcNAc...) asparagine glycosylation. A helical membrane pass occupies residues 347 to 367 (VLALLQCLNLALLLADVCLNF). Topologically, residues 368–438 (LPSIYLIFII…PLHDFLCHLP (71 aa)) are cytoplasmic. The Lysosomal targeting motif signature appears at 409–419 (MEAACISDTLG). C435 bears the Cysteine methyl ester mark. C435 carries S-farnesyl cysteine lipidation. A propeptide spans 436 to 438 (HLP) (removed in mature form).

This sequence belongs to the battenin family. In terms of assembly, homooligomer. Interacts with DCTN1, KIF3A, RAB7A and RILP. Interacts with CLN5. Interacts with KCNIP3. In terms of processing, highly glycosylated. Post-translationally, farnesylation is important for trafficking to lysosomes. In terms of tissue distribution, expressed throughout the brain, such as, in the cerebral cortex, hippocampus, cerebellum and several different cerebral nuclei (at protein level). In the cerebral cortex, expressed in all cortical layers. In the hippocampus, expressed in the granule cells in the dentate gyrus and the pyramidal cells of the hippocampus proper. In the cerebellum expressed in the granular and molecular layers, and in the Purkinje cell layer.

It is found in the lysosome membrane. Its subcellular location is the late endosome. The protein localises to the lysosome. It localises to the membrane raft. The protein resides in the golgi apparatus. It is found in the trans-Golgi network. Its subcellular location is the synapse. The protein localises to the synaptosome. It localises to the early endosome membrane. The protein resides in the late endosome membrane. It is found in the cytoplasmic vesicle. Its subcellular location is the autophagosome. Its function is as follows. Mediates microtubule-dependent, anterograde transport connecting the Golgi network, endosomes, autophagosomes, lysosomes and plasma membrane, and participates in several cellular processes such as regulation of lysosomal pH, lysosome protein degradation, receptor-mediated endocytosis, autophagy, transport of proteins and lipids from the TGN, apoptosis and synaptic transmission. Facilitates the proteins transport from trans-Golgi network (TGN)-to other membrane compartments such as transport of microdomain-associated proteins to the plasma membrane, IGF2R transport to the lysosome where it regulates the CTSD release leading to regulation of CTSD maturation and thereby APP intracellular processing. Moreover regulates CTSD activity in response to osmotic stress. Also binds galactosylceramide and transports it from the trans Golgi to the rafts, which may have immediate and downstream effects on cell survival by modulating ceramide synthesis. At the plasma membrane, regulates actin-dependent events including filopodia formation, cell migration, and pinocytosis through ARF1-CDC42 pathway and also the cytoskeleton organization through interaction with MYH10 and fodrin leading to the regulation of the plasma membrane association of Na+, K+ ATPase complex. Regulates synaptic transmission in the amygdala, hippocampus, and cerebellum through regulation of synaptic vesicles density and their proximity to active zones leading to modulation of short-term plasticity and age-dependent anxious behavior, learning and memory. Regulates autophagic vacuoles (AVs) maturation by modulating the trafficking between endocytic and autophagolysosomal/lysosomal compartments, which involves vesicle fusion leading to regulation of degradation process. Also participates in cellular homeostasis of compounds such as, water, ions, amino acids, proteins and lipids in several tissue namely in brain and kidney through regulation of their transport and synthesis. This Mus musculus (Mouse) protein is Battenin.